The sequence spans 386 residues: MSSIPANLPLRNDLIGEEPYGAPQLDVPVCLNVNENPYAPDPAVCDTIAKRVREIAPTLNRYPDREHIELRQAFSDYLARESGTRLDVDELWGANGSNEIMLQLFQAFGGPGRTALGADPTYSMYPEYARDTFTGWKLAHRNADFTLNVDKVLEAIAEVKPSMVLLTSPNNPTGTPLPMEDIERILAACETAEVVGAGEGVHPILVIDEAYVEFRKPGTPSAVSLIKDHPNLAVSRTMSKAFAFAGARVGYLAASKGIIDCVRIVRMPYHLSAVTQAAALAAFEHADEQLSRVEHLRETREATAAWLKEQTYKDQPLEVAESGSNFLLFGGHFDKREAIFDELLKRGVLIRVVGPDGWLRVCMGTDEEMETFRNALVEVLRIVEAA.

Lys-240 carries the post-translational modification N6-(pyridoxal phosphate)lysine.

The protein belongs to the class-II pyridoxal-phosphate-dependent aminotransferase family. Histidinol-phosphate aminotransferase subfamily. As to quaternary structure, homodimer. The cofactor is pyridoxal 5'-phosphate.

The enzyme catalyses L-histidinol phosphate + 2-oxoglutarate = 3-(imidazol-4-yl)-2-oxopropyl phosphate + L-glutamate. It participates in amino-acid biosynthesis; L-histidine biosynthesis; L-histidine from 5-phospho-alpha-D-ribose 1-diphosphate: step 7/9. This is Histidinol-phosphate aminotransferase from Bifidobacterium longum (strain NCC 2705).